A 225-amino-acid polypeptide reads, in one-letter code: Prolactin (225 aa).

The signal sequence occupies residues 1 to 28 (MTIQGSDRKGTLLLLVMSNLLFCQNVHP). Cysteines 32 and 37 form a disulfide. Phosphoserine occurs at positions 52 and 116. Intrachain disulfides connect cysteine 84–cysteine 200 and cysteine 217–cysteine 225.

It belongs to the somatotropin/prolactin family. As to quaternary structure, interacts with PRLR.

It localises to the secreted. Functionally, prolactin acts primarily on the mammary gland by promoting lactation. In Alexandromys montebelli (Japanese grass vole), this protein is Prolactin (PRL).